Reading from the N-terminus, the 596-residue chain is Chaperonin 60 subunit beta 2, chloroplastic (596 aa).

The N-terminal 50 residues, 1 to 50 (MASTFTATSSLGSLLAPNAIKLSSATSISSSSFGRRHNVCVRRSRPAIVC), are a transit peptide targeting the chloroplast. Residues Ser-97 and Ser-474 each carry the phosphoserine modification. Positions 388-489 (TQEAVNKRVV…KDTLENDEEK (102 aa)) form a coiled coil.

It belongs to the chaperonin (HSP60) family. In terms of assembly, part of the Cpn60 complex composed of 7 alpha and 7 beta subunits. Can also form a complex composed of 14 beta subunits only. Both complexes show ATPase activity. The Cpn60 complex interacts with the Cpn10 complex. Interacts with RAB during heat stress.

The protein localises to the plastid. It is found in the chloroplast stroma. Functionally, involved in protein assisted folding. The polypeptide is Chaperonin 60 subunit beta 2, chloroplastic (CPN60B2) (Arabidopsis thaliana (Mouse-ear cress)).